The following is a 346-amino-acid chain: Putative isoaspartyl peptidase/L-asparaginase (346 aa).

Thr-207 functions as the Nucleophile in the catalytic mechanism. Residues 235–238 and 257–260 each bind substrate; these read RVGD and TGTG.

It belongs to the Ntn-hydrolases family. In terms of assembly, heterodimer of an alpha and beta chain produced by autocleavage. Cleaved into an alpha and beta chain by autocatalysis; this activates the enzyme. The N-terminal residue of the beta subunit is responsible for the nucleophile hydrolase activity.

It carries out the reaction Cleavage of a beta-linked Asp residue from the N-terminus of a polypeptide.. The enzyme catalyses L-asparagine + H2O = L-aspartate + NH4(+). In terms of biological role, has both L-asparaginase and beta-aspartyl peptidase activity. Does not have aspartylglucosaminidase activity and is inactive toward GlcNAc-L-Asn. Likewise, has no activity toward glutamine. This is Putative isoaspartyl peptidase/L-asparaginase from Dictyostelium discoideum (Social amoeba).